Here is a 747-residue protein sequence, read N- to C-terminus: Kinesin-like protein KIF3B (747 aa).

Met1 carries the post-translational modification N-acetylmethionine. Ser2 carries the N-acetylserine; in Kinesin-like protein KIF3B, N-terminally processed modification. The region spanning 9 to 340 (SVRVVVRCRP…LRYANRAKNI (332 aa)) is the Kinesin motor domain. 96-103 (GQTGTGKT) serves as a coordination point for ATP. A coiled-coil region spans residues 346–579 (VNEDPKDALL…EQTQNELTRE (234 aa)). Disordered regions lie at residues 374 to 412 (IGRR…DKDD) and 699 to 747 (QVDA…LVPK). Over residues 393–411 (GEEEEEEGEEGEEEGDDKD) the composition is skewed to acidic residues. The globular stretch occupies residues 580 to 747 (LKLKHLIIEN…YPQSRGLVPK (168 aa)). A compositionally biased stretch (polar residues) spans 701–710 (DASSFESTAN). Residues 711–721 (KKSKARPKSGR) are compositionally biased toward basic residues. The span at 722-735 (KSGSSSSSSGTPAS) shows a compositional bias: low complexity.

Belongs to the TRAFAC class myosin-kinesin ATPase superfamily. Kinesin family. Kinesin II subfamily. Heterodimer of KIF3A and KIF3B. KIF3A/KIF3B heterodimer interacts with KIFAP3 forming a heterotrimeric (KIF3A/KIF3B/KIFAP3) complex. Interacts directly with IFT20. Interacts with the SMC3 subunit of the cohesin complex. Interacts with FLCN.

Its subcellular location is the cytoplasm. The protein resides in the cytoskeleton. It is found in the cell projection. The protein localises to the cilium. It localises to the dendritic spine. Functionally, microtubule-based molecular motor that transport intracellular cargos, such as vesicles, organelles and protein complexes. Uses ATP hydrolysis to generate force to bind and move along the microtubule. Plays a role in cilia formation. Involved in photoreceptor integrity and opsin trafficking in rod photoreceptors. Transports vesicles containing N-methyl-D-aspartate (NMDA) receptor subunit GRIN2A into neuronal dendrites. In Homo sapiens (Human), this protein is Kinesin-like protein KIF3B (KIF3B).